A 399-amino-acid chain; its full sequence is UDP-N-acetylglucosamine--N-acetylmuramyl-(pentapeptide) pyrophosphoryl-undecaprenol N-acetylglucosamine transferase (399 aa).

Residues 29 to 31, Asn-148, Arg-185, Ser-219, and Gln-318 each bind UDP-N-acetyl-alpha-D-glucosamine; that span reads TAG.

This sequence belongs to the glycosyltransferase 28 family. MurG subfamily.

It localises to the cell membrane. It carries out the reaction di-trans,octa-cis-undecaprenyl diphospho-N-acetyl-alpha-D-muramoyl-L-alanyl-D-glutamyl-meso-2,6-diaminopimeloyl-D-alanyl-D-alanine + UDP-N-acetyl-alpha-D-glucosamine = di-trans,octa-cis-undecaprenyl diphospho-[N-acetyl-alpha-D-glucosaminyl-(1-&gt;4)]-N-acetyl-alpha-D-muramoyl-L-alanyl-D-glutamyl-meso-2,6-diaminopimeloyl-D-alanyl-D-alanine + UDP + H(+). The protein operates within cell wall biogenesis; peptidoglycan biosynthesis. Functionally, cell wall formation. Catalyzes the transfer of a GlcNAc subunit on undecaprenyl-pyrophosphoryl-MurNAc-pentapeptide (lipid intermediate I) to form undecaprenyl-pyrophosphoryl-MurNAc-(pentapeptide)GlcNAc (lipid intermediate II). The sequence is that of UDP-N-acetylglucosamine--N-acetylmuramyl-(pentapeptide) pyrophosphoryl-undecaprenol N-acetylglucosamine transferase from Mycobacterium ulcerans (strain Agy99).